The chain runs to 143 residues: Nucleoside diphosphate kinase (143 aa).

ATP contacts are provided by K11, F59, R87, T93, R104, and N114. Residue H117 is the Pros-phosphohistidine intermediate of the active site.

Belongs to the NDK family. As to quaternary structure, homotetramer. Mg(2+) is required as a cofactor.

The protein resides in the cytoplasm. The enzyme catalyses a 2'-deoxyribonucleoside 5'-diphosphate + ATP = a 2'-deoxyribonucleoside 5'-triphosphate + ADP. It carries out the reaction a ribonucleoside 5'-diphosphate + ATP = a ribonucleoside 5'-triphosphate + ADP. Major role in the synthesis of nucleoside triphosphates other than ATP. The ATP gamma phosphate is transferred to the NDP beta phosphate via a ping-pong mechanism, using a phosphorylated active-site intermediate. The polypeptide is Nucleoside diphosphate kinase (Thioalkalivibrio sulfidiphilus (strain HL-EbGR7)).